A 398-amino-acid polypeptide reads, in one-letter code: Polyferredoxin protein VhuB (398 aa).

4Fe-4S ferredoxin-type domains follow at residues 2 to 31 (AGIK…IAPF), 25 to 53 (AIEI…VENN), 54 to 83 (GKLI…VDDR), 82 to 111 (DRFP…IPGK), 123 to 152 (QEPI…IEDE), 152 to 181 (ELAV…VAGK), 191 to 219 (KSFT…YNRE), 220 to 249 (DLIV…LEVE), 259 to 291 (EGLV…MINQ), 300 to 331 (TKTD…MGKI), and 339 to 368 (NRIE…LTGD). Positions 11, 14, 17, 21, 34, 37, 40, 44, 63, 66, 69, 73, 91, 94, 97, 101, 132, 135, 138, 142, 161, 164, 167, 171, 199, 202, 205, 209, 229, 232, 235, 239, 268, 271, 274, 278, 311, 314, 317, 321, 348, 351, 354, 358, 377, 380, 383, and 387 each coordinate [4Fe-4S] cluster.

[4Fe-4S] cluster serves as cofactor.

This Methanococcus voltae protein is Polyferredoxin protein VhuB (vhuB).